Reading from the N-terminus, the 382-residue chain is V-type proton ATPase subunit C 1 (382 aa).

At Thr2 the chain carries N-acetylthreonine.

The protein belongs to the V-ATPase C subunit family. As to quaternary structure, V-ATPase is a heteromultimeric enzyme made up of two complexes: the ATP-hydrolytic V1 complex and the proton translocation V0 complex. The V1 complex consists of three catalytic AB heterodimers that form a heterohexamer, three peripheral stalks each consisting of EG heterodimers, one central rotor including subunits D and F, and the regulatory subunits C and H. The proton translocation complex V0 consists of the proton transport subunit a, a ring of proteolipid subunits c9c'', rotary subunit d, subunits e and f, and two accessory subunits.

Subunit of the V1 complex of vacuolar(H+)-ATPase (V-ATPase), a multisubunit enzyme composed of a peripheral complex (V1) that hydrolyzes ATP and a membrane integral complex (V0) that translocates protons. V-ATPase is responsible for acidifying and maintaining the pH of intracellular compartments and in some cell types, is targeted to the plasma membrane, where it is responsible for acidifying the extracellular environment. Subunit C is necessary for the assembly of the catalytic sector of the enzyme and is likely to have a specific function in its catalytic activity. The chain is V-type proton ATPase subunit C 1 (atp6v1c1) from Xenopus laevis (African clawed frog).